Consider the following 149-residue polypeptide: Heavy metal-associated isoprenylated plant protein 21 (149 aa).

The region spanning 25–88 (LQTVDIKVKM…RVKSTGKKAE (64 aa)) is the HMA domain. Residues Cys-36 and Cys-39 each coordinate a metal cation. Cys-146 carries the post-translational modification Cysteine methyl ester. Residue Cys-146 is the site of S-farnesyl cysteine attachment. The propeptide at 147–149 (SIM) is removed in mature form.

The protein belongs to the HIPP family. Interacts with ZHD11/HB29. In terms of tissue distribution, expressed at low levels in leaves and sepals.

It is found in the membrane. In terms of biological role, heavy-metal-binding protein. Binds cadmium. May be involved in cadmium transport and play a role in cadmium detoxification. The chain is Heavy metal-associated isoprenylated plant protein 21 from Arabidopsis thaliana (Mouse-ear cress).